A 364-amino-acid chain; its full sequence is MSSHAPASSFSVSGLLAYCRAGFEKELAAEIDDLAADAGLIGYVRTEPGSGYAAFETFEPVPVIKLGEFADWRKPVFARQLLPWFDRIDDLPERDRARPLVDMVKGSGQRFSGVVLETPDTDEAKQRSGFCRRFTEPLTRELEKVGALRLGKPGFPVLHVMFPTATSAWLAAGLKDRCAPWPMGIPRLRMPSNAPSRSTLKLAEAIMTLLSDEERDSLLRAGMRAVDLGAAPGGWTWQLAQRGIRVTAIDNGPLRDTVMATEMVEHLKADGFTWRPQRPVDWMVCDMVEQPSRIASLMAEWIATGRCRHTIFNLKLPMKRRLEAVEQCRELIRKRLASIGPFDLRIKQLYHDREEVTAYLTLKK.

Residues S198, 231–234, D250, D270, and D286 each bind S-adenosyl-L-methionine; that span reads APGG. The Proton acceptor role is filled by K315.

It belongs to the class I-like SAM-binding methyltransferase superfamily. RNA methyltransferase RlmE family. RlmM subfamily. Monomer.

It is found in the cytoplasm. The catalysed reaction is cytidine(2498) in 23S rRNA + S-adenosyl-L-methionine = 2'-O-methylcytidine(2498) in 23S rRNA + S-adenosyl-L-homocysteine + H(+). In terms of biological role, catalyzes the 2'-O-methylation at nucleotide C2498 in 23S rRNA. This is Ribosomal RNA large subunit methyltransferase M from Azoarcus sp. (strain BH72).